The following is a 139-amino-acid chain: Plastocyanin (139 aa).

The N-terminal stretch at 1–34 is a signal peptide; that stretch reads MKLISASLRRFSLAVLTILLVVSSFAVFTPSASA. One can recognise a Plastocyanin-like domain in the interval 35–139; it reads ETYQVKLGTD…GMVGTITVQG (105 aa). The Cu cation site is built by H73, C123, H126, and M131.

This sequence belongs to the plastocyanin family. Requires Cu(2+) as cofactor.

It localises to the cellular thylakoid membrane. Functionally, participates in electron transfer between P700 and the cytochrome b6-f complex in photosystem I. The protein is Plastocyanin of Nostoc punctiforme (strain ATCC 29133 / PCC 73102).